The chain runs to 151 residues: Ribosome maturation factor RimP (151 aa).

This sequence belongs to the RimP family.

It localises to the cytoplasm. Functionally, required for maturation of 30S ribosomal subunits. The sequence is that of Ribosome maturation factor RimP from Thermoanaerobacter sp. (strain X514).